Here is a 371-residue protein sequence, read N- to C-terminus: tRNA-specific 2-thiouridylase MnmA (371 aa).

Residues 13–20 and Met39 contribute to the ATP site; that span reads GMSGGVDS. Residues 99–101 form an interaction with target base in tRNA region; the sequence is NPD. The active-site Nucleophile is Cys104. The cysteines at positions 104 and 200 are disulfide-linked. ATP is bound at residue Gly128. Residues 150–152 form an interaction with tRNA region; it reads KDQ. The active-site Cysteine persulfide intermediate is the Cys200. Residues 308-309 are interaction with tRNA; the sequence is RY.

Belongs to the MnmA/TRMU family.

The protein localises to the cytoplasm. It carries out the reaction S-sulfanyl-L-cysteinyl-[protein] + uridine(34) in tRNA + AH2 + ATP = 2-thiouridine(34) in tRNA + L-cysteinyl-[protein] + A + AMP + diphosphate + H(+). Functionally, catalyzes the 2-thiolation of uridine at the wobble position (U34) of tRNA, leading to the formation of s(2)U34. The protein is tRNA-specific 2-thiouridylase MnmA of Listeria monocytogenes serovar 1/2a (strain ATCC BAA-679 / EGD-e).